A 345-amino-acid polypeptide reads, in one-letter code: Nicotinate-nucleotide--dimethylbenzimidazole phosphoribosyltransferase (345 aa).

The active-site Proton acceptor is the Glu-312.

It belongs to the CobT family.

The enzyme catalyses 5,6-dimethylbenzimidazole + nicotinate beta-D-ribonucleotide = alpha-ribazole 5'-phosphate + nicotinate + H(+). The protein operates within nucleoside biosynthesis; alpha-ribazole biosynthesis; alpha-ribazole from 5,6-dimethylbenzimidazole: step 1/2. Its function is as follows. Catalyzes the synthesis of alpha-ribazole-5'-phosphate from nicotinate mononucleotide (NAMN) and 5,6-dimethylbenzimidazole (DMB). The sequence is that of Nicotinate-nucleotide--dimethylbenzimidazole phosphoribosyltransferase from Bacteroides fragilis (strain ATCC 25285 / DSM 2151 / CCUG 4856 / JCM 11019 / LMG 10263 / NCTC 9343 / Onslow / VPI 2553 / EN-2).